Here is a 351-residue protein sequence, read N- to C-terminus: UDP-N-acetylglucosamine--N-acetylmuramyl-(pentapeptide) pyrophosphoryl-undecaprenol N-acetylglucosamine transferase (351 aa).

UDP-N-acetyl-alpha-D-glucosamine-binding positions include 13–15 (TGG), Asn-125, Arg-161, Ser-189, Ile-241, 260–265 (ALTVCE), and Gln-285.

This sequence belongs to the glycosyltransferase 28 family. MurG subfamily.

It is found in the cell inner membrane. The enzyme catalyses di-trans,octa-cis-undecaprenyl diphospho-N-acetyl-alpha-D-muramoyl-L-alanyl-D-glutamyl-meso-2,6-diaminopimeloyl-D-alanyl-D-alanine + UDP-N-acetyl-alpha-D-glucosamine = di-trans,octa-cis-undecaprenyl diphospho-[N-acetyl-alpha-D-glucosaminyl-(1-&gt;4)]-N-acetyl-alpha-D-muramoyl-L-alanyl-D-glutamyl-meso-2,6-diaminopimeloyl-D-alanyl-D-alanine + UDP + H(+). It participates in cell wall biogenesis; peptidoglycan biosynthesis. Functionally, cell wall formation. Catalyzes the transfer of a GlcNAc subunit on undecaprenyl-pyrophosphoryl-MurNAc-pentapeptide (lipid intermediate I) to form undecaprenyl-pyrophosphoryl-MurNAc-(pentapeptide)GlcNAc (lipid intermediate II). In Haemophilus influenzae (strain ATCC 51907 / DSM 11121 / KW20 / Rd), this protein is UDP-N-acetylglucosamine--N-acetylmuramyl-(pentapeptide) pyrophosphoryl-undecaprenol N-acetylglucosamine transferase.